The primary structure comprises 43 residues: Protein PsbN (43 aa).

The chain crosses the membrane as a helical span at residues 5–27 (TLVAISISRLLVSFTGYALYTAF).

This sequence belongs to the PsbN family.

The protein localises to the plastid. It localises to the chloroplast thylakoid membrane. In terms of biological role, may play a role in photosystem I and II biogenesis. The chain is Protein PsbN from Cycas taitungensis (Prince sago).